A 64-amino-acid polypeptide reads, in one-letter code: Lectin-A (64 aa).

Chitin-binding type-1 domains lie at 1–20 and 22–45; these read APEC…QVVT and DFDD…NTDA.

Glycosylated.

N-acetyl-D-glucosamine binding lectin. Shows low hemagglutinating activity towards human erythrocytes. Has low mitogenic activity towards human peripheral blood lymphocytes. This chain is Lectin-A, found in Phytolacca americana (American pokeweed).